The chain runs to 473 residues: Serine palmitoyltransferase 1 (473 aa).

Topologically, residues 1–15 are lumenal; sequence MATATEQWVLVEMVQ. The tract at residues 1–66 is interaction with SPTLC2; the sequence is MATATEQWVL…KEELIEEWQP (66 aa). A helical membrane pass occupies residues 16–36; it reads ALYEAPAYHLILEGILILWII. Residues 37–473 are Cytoplasmic-facing; it reads RLLFSKTYKL…IKEVAQAVLL (437 aa). Residue Tyr-164 is modified to Phosphotyrosine; by ABL.

Belongs to the class-II pyridoxal-phosphate-dependent aminotransferase family. In terms of assembly, component of the serine palmitoyltransferase (SPT) complex, which is also composed of SPTLC2 or SPTLC3 and SPTSSA or SPTSSB. The heterodimer with SPTLC2 or SPTLC3 forms the catalytic core of the enzyme, while SPTSSA or SPTSSB subunits determine substrate specificity. SPT also interacts with ORMDL proteins, especially ORMDL3, which negatively regulate SPT activity in the presence of ceramides. Forms dimers of heterodimers with SPTLC2. Interacts with RTN4. Pyridoxal 5'-phosphate serves as cofactor. Post-translationally, phosphorylation at Tyr-164 inhibits activity and promotes cell survival.

It localises to the endoplasmic reticulum membrane. It carries out the reaction L-serine + hexadecanoyl-CoA + H(+) = 3-oxosphinganine + CO2 + CoA. The enzyme catalyses octadecanoyl-CoA + L-serine + H(+) = 3-oxoeicosasphinganine + CO2 + CoA. The catalysed reaction is tetradecanoyl-CoA + L-serine + H(+) = 3-oxohexadecasphinganine + CO2 + CoA. It catalyses the reaction dodecanoyl-CoA + L-serine + H(+) = 3-oxotetradecasphinganine + CO2 + CoA. It functions in the pathway lipid metabolism; sphingolipid metabolism. SPT complex catalytic activity is negatively regulated by ORMDL proteins, including ORMDL3, in the presence of ceramides. This mechanism allows to maintain ceramide levels at sufficient concentrations for the production of complex sphingolipids, but which prevents the accumulation of ceramides to levels that trigger apoptosis. Functionally, component of the serine palmitoyltransferase multisubunit enzyme (SPT) that catalyzes the initial and rate-limiting step in sphingolipid biosynthesis by condensing L-serine and activated acyl-CoA (most commonly palmitoyl-CoA) to form long-chain bases. The SPT complex is also composed of SPTLC2 or SPTLC3 and SPTSSA or SPTSSB. Within this complex, the heterodimer with SPTLC2 or SPTLC3 forms the catalytic core. The composition of the serine palmitoyltransferase (SPT) complex determines the substrate preference. The SPTLC1-SPTLC2-SPTSSA complex shows a strong preference for C16-CoA substrate, while the SPTLC1-SPTLC3-SPTSSA isozyme uses both C14-CoA and C16-CoA as substrates, with a slight preference for C14-CoA. The SPTLC1-SPTLC2-SPTSSB complex shows a strong preference for C18-CoA substrate, while the SPTLC1-SPTLC3-SPTSSB isozyme displays an ability to use a broader range of acyl-CoAs, without apparent preference. Required for adipocyte cell viability and metabolic homeostasis. The protein is Serine palmitoyltransferase 1 (SPTLC1) of Macaca fascicularis (Crab-eating macaque).